The primary structure comprises 169 residues: NADH-quinone oxidoreductase subunit B (169 aa).

Positions 45, 46, 111, and 141 each coordinate [4Fe-4S] cluster.

This sequence belongs to the complex I 20 kDa subunit family. NDH-1 is composed of 14 different subunits. Subunits NuoB, C, D, E, F, and G constitute the peripheral sector of the complex. It depends on [4Fe-4S] cluster as a cofactor.

It localises to the cell membrane. It carries out the reaction a quinone + NADH + 5 H(+)(in) = a quinol + NAD(+) + 4 H(+)(out). NDH-1 shuttles electrons from NADH, via FMN and iron-sulfur (Fe-S) centers, to quinones in the respiratory chain. The immediate electron acceptor for the enzyme in this species is believed to be a menaquinone. Couples the redox reaction to proton translocation (for every two electrons transferred, four hydrogen ions are translocated across the cytoplasmic membrane), and thus conserves the redox energy in a proton gradient. This is NADH-quinone oxidoreductase subunit B from Clostridium beijerinckii (strain ATCC 51743 / NCIMB 8052) (Clostridium acetobutylicum).